Here is a 122-residue protein sequence, read N- to C-terminus: Urocortin (122 aa).

The first 25 residues, 1–25, serve as a signal peptide directing secretion; sequence MIQRGRATLLVALLLLAQLRPESSQ. The propeptide occupies 26–80; the sequence is WSPAAAAATGVQDPNLRWSPGVRNQGGGVRALLLLLAERFPRRAGSEPAGERQRR. The residue at position 120 (V120) is a Valine amide.

Belongs to the sauvagine/corticotropin-releasing factor/urotensin I family. As to quaternary structure, interacts with CRHR1 and CRHR2 (via their N-terminal extracellular domain). In the organ of Corti, detected in the inner hair cell region (at protein level). Expressed in skin (at protein level).

Its subcellular location is the secreted. In terms of biological role, acts in vitro to stimulate the secretion of adrenocorticotropic hormone (ACTH). Binds with high affinity to CRF receptor types 1, 2-alpha, and 2-beta. Plays a role in the establishment of normal hearing thresholds. Reduces food intake and regulates ghrelin levels in gastric body and plasma. The chain is Urocortin (Ucn) from Mus musculus (Mouse).